A 348-amino-acid polypeptide reads, in one-letter code: MVRTINETFLKACRGERTDYVPAWYMRQAGRSQPEYRKIKEKYSLFEITHNPELCAYVTKLPVDQYNVDAAILYKDIMSPLPAIGVDVEIKSGIGPVIDNPIRSLQDVEKLGEINPEDDVPYILDTIRLLTTEMLDVPLIGFSGAPFTLASYMIEGGPSRNYHNTKAFMYAEPKAWFALMDKLADMVITYLKAQINAGAKAVQIFDSWVGTVNVADYRVFIKPAMERIFAEVRKMGVPMIMHGVGAAHLVNEWHDLPLDVVGLDWRLPIEEARARGVHKAVQGNMDPSFLLAPWSVIEEHVKGILDQGMKQPGYIFNLGHGVFPEVNPDTLKRLTTFIHEYSKGQLAK.

Substrate-binding positions include 27-31 (RQAGR), Phe-46, Asp-76, Tyr-152, Ser-207, and His-320.

It belongs to the uroporphyrinogen decarboxylase family. Homodimer.

The protein localises to the cytoplasm. It carries out the reaction uroporphyrinogen III + 4 H(+) = coproporphyrinogen III + 4 CO2. Its pathway is porphyrin-containing compound metabolism; protoporphyrin-IX biosynthesis; coproporphyrinogen-III from 5-aminolevulinate: step 4/4. In terms of biological role, catalyzes the decarboxylation of four acetate groups of uroporphyrinogen-III to yield coproporphyrinogen-III. The chain is Uroporphyrinogen decarboxylase from Bacillus cereus (strain B4264).